An 822-amino-acid chain; its full sequence is Dimethyl sulfoxide/trimethylamine N-oxide reductase (822 aa).

The segment at residues 1–42 (MTKLSGQELHAELSRRAFLSYTAAVGALGLCGTSLLAQGARA) is a signal peptide (tat-type signal). Mo-bis(molybdopterin guanine dinucleotide) contacts are provided by residues W158, 158–160 (WKS), S189, 232–233 (KT), 262–263 (IN), 283–285 (QTD), 364–365 (WS), R368, N476, H480, 500–501 (QD), R523, D553, 683–686 (ASHP), R689, 691–693 (HSQ), N779, and 796–797 (GQ).

It belongs to the prokaryotic molybdopterin-containing oxidoreductase family. As to quaternary structure, homodimer. It depends on Mo-bis(molybdopterin guanine dinucleotide) as a cofactor. Predicted to be exported by the Tat system. The position of the signal peptide cleavage has been experimentally proven.

The protein resides in the periplasm. It carries out the reaction dimethyl sulfide + a menaquinone + H2O = dimethyl sulfoxide + a menaquinol. The enzyme catalyses trimethylamine + 2 Fe(III)-[cytochrome c] + H2O = trimethylamine N-oxide + 2 Fe(II)-[cytochrome c] + 3 H(+). Functionally, catalyzes the reduction of dimethyl sulfoxide (DMSO) and trimethylamine N-oxide (TMAO) to dimethyl sulfide (DMS) and trimethylamine, respectively. The terminal DMSO reductase can also use various sulfoxides and N-oxide compounds as terminal electron acceptor in addition to DMSO and TMAO. This chain is Dimethyl sulfoxide/trimethylamine N-oxide reductase (dmsA), found in Cereibacter sphaeroides (Rhodobacter sphaeroides).